The sequence spans 347 residues: tRNA N6-adenosine threonylcarbamoyltransferase (347 aa).

Residues H113 and H117 each coordinate Fe cation. Substrate contacts are provided by residues I136–G140, D170, G183, D187, and N282. D310 serves as a coordination point for Fe cation.

Belongs to the KAE1 / TsaD family. The cofactor is Fe(2+).

The protein resides in the cytoplasm. It carries out the reaction L-threonylcarbamoyladenylate + adenosine(37) in tRNA = N(6)-L-threonylcarbamoyladenosine(37) in tRNA + AMP + H(+). Required for the formation of a threonylcarbamoyl group on adenosine at position 37 (t(6)A37) in tRNAs that read codons beginning with adenine. Is involved in the transfer of the threonylcarbamoyl moiety of threonylcarbamoyl-AMP (TC-AMP) to the N6 group of A37, together with TsaE and TsaB. TsaD likely plays a direct catalytic role in this reaction. This Bifidobacterium longum (strain NCC 2705) protein is tRNA N6-adenosine threonylcarbamoyltransferase.